The following is a 294-amino-acid chain: Epimerase family protein SDR39U1 (294 aa).

NADP(+) is bound by residues 31–32, 58–59, E77, R82, and V160; these read SR and LA.

It belongs to the NAD(P)-dependent epimerase/dehydratase family. SDR39U1 subfamily.

Putative NADP-dependent oxidoreductase. This chain is Epimerase family protein SDR39U1 (SDR39U1), found in Bos taurus (Bovine).